The chain runs to 778 residues: Kin of IRRE-like protein 3 (778 aa).

Residues 1 to 21 (MRPFQLDLLFLCFFLFSQELG) form the signal peptide. Residues 22 to 535 (LQKRGCCLVL…GLEAESVPMA (514 aa)) lie on the Extracellular side of the membrane. Ig-like C2-type domains lie at 48–142 (YSFS…ARLT), 147–243 (PDDP…TSVT), 249–330 (PPLV…RTVD), 335–415 (PRMT…VTLT), and 419–515 (PPII…IRLK). Residues Cys69 and Cys127 are joined by a disulfide bond. A glycan (N-linked (GlcNAc...) asparagine) is linked at Asn167. A disulfide bond links Cys170 and Cys227. N-linked (GlcNAc...) asparagine glycosylation is present at Asn253. A disulfide bridge links Cys271 with Cys314. Asn324 carries an N-linked (GlcNAc...) asparagine glycan. Cystine bridges form between Cys356/Cys398 and Cys440/Cys499. N-linked (GlcNAc...) asparagine glycosylation is present at Asn498. Residues 536–556 (VIIGVAVGAGVAFLVLMATIV) traverse the membrane as a helical segment. Residues 557–778 (AFCCARSQRN…PLQRRMQTHV (222 aa)) lie on the Cytoplasmic side of the membrane. Positions 727-736 (CDSSVSSSGK) are enriched in polar residues. The interval 727–778 (CDSSVSSSGKQDGYVQFDKASKASASSSHHSQSSSQNSDPSRPLQRRMQTHV) is disordered. The segment covering 748-762 (KASASSSHHSQSSSQ) has biased composition (low complexity).

This sequence belongs to the immunoglobulin superfamily. In terms of assembly, homodimer; mediates homophilic interactions to promote cell adhesion. Interacts with NPHS1; forms heterodimers with NPHS1. Interacts with NPHS2/podocin (via the C-terminus). Interacts with CASK. Interacts (via extracellular region) with MAP1B. Interacts (via extracellular region) with MYO16. Interacts (via intracellular region) with ATP1B1. Interacts (via intracellular region) with SHMT2. Interacts (via intracellular region) with UFC1. Post-translationally, undergoes proteolysis by a metalloprotease and gives rise to a soluble form. Expressed mainly in adult brain, bone marrow and stromal cells. Expressed in diverse regions of the brain, including the cortex, hippocampus, striatum, olfactory bulb and cerebellum. In brain, expressed in pontine nucleus neurons (at protein level). In hippocampus, produced in both the dentate granule neurons and the GABAergic neurons, but not the CA3 neurons. Expressed in subpopulations of vomeronasal sensory neurons. Expressed in a subset of neurons in dorsal root ganglia.

The protein resides in the cell membrane. It is found in the cell projection. It localises to the axon. Its subcellular location is the dendrite. The protein localises to the secreted. Functionally, synaptic adhesion molecule required for the formation of target-specific synapses. Required for formation of target-specific synapses at hippocampal mossy fiber synapses. Required for formation of mossy fiber filopodia, the synaptic structures connecting dentate granule and GABA neurons. Probably acts as a homophilic adhesion molecule that promotes trans-cellular interactions and stabilize mossy fiber filipodia contact and subsequent synapse formation. Required for the coalescence of vomeronasal sensory neuron axons. May be involved in the hematopoietic supportive capacity of stroma cells; the secreted extracellular domain is directly responsible for supporting hematopoietic stem cells. The protein is Kin of IRRE-like protein 3 (Kirrel3) of Mus musculus (Mouse).